The primary structure comprises 910 residues: Protein translocase subunit SecA (910 aa).

ATP contacts are provided by residues glutamine 89, 107–111 (GEGKT), and aspartate 496. Residues 873–910 (QEFSGGNLNRSQSNGSSVTVTTSSGGGTERKTSRRRKR) form a disordered region. The segment covering 876–886 (SGGNLNRSQSN) has biased composition (polar residues).

Belongs to the SecA family. In terms of assembly, monomer and homodimer. Part of the essential Sec protein translocation apparatus which comprises SecA, SecYEG and auxiliary proteins SecDF. Other proteins may also be involved.

It localises to the cell inner membrane. The protein resides in the cytoplasm. The catalysed reaction is ATP + H2O + cellular proteinSide 1 = ADP + phosphate + cellular proteinSide 2.. In terms of biological role, part of the Sec protein translocase complex. Interacts with the SecYEG preprotein conducting channel. Has a central role in coupling the hydrolysis of ATP to the transfer of proteins into and across the cell membrane, serving as an ATP-driven molecular motor driving the stepwise translocation of polypeptide chains across the membrane. The sequence is that of Protein translocase subunit SecA from Leptospira interrogans serogroup Icterohaemorrhagiae serovar copenhageni (strain Fiocruz L1-130).